Reading from the N-terminus, the 633-residue chain is Early transcription factor 70 kDa subunit (633 aa).

Residues Arg32 to Glu185 enclose the Helicase ATP-binding domain. Position 45 to 52 (His45 to Thr52) interacts with ATP. Positions Asp135–His138 match the DEXH box motif. Positions Lys326–Leu505 constitute a Helicase C-terminal domain.

This sequence belongs to the helicase family. VETF subfamily. Heterodimer of a 70 kDa and a 82 kDa subunit. Part of the early transcription complex composed of ETF, RAP94, and the DNA-directed RNA polymerase.

The protein resides in the virion. Acts with RNA polymerase to initiate transcription from early gene promoters. Is recruited by the RPO-associated protein of 94 kDa (RAP94) to form the early transcription complex, which also contains the core RNA polymerase. ETF heterodimer binds to early gene promoters. The protein is Early transcription factor 70 kDa subunit (VETFS) of Vertebrata (FPV).